Reading from the N-terminus, the 699-residue chain is Long-chain-fatty-acid--CoA ligase 1 (699 aa).

The residue at position 1 (M1) is an N-acetylmethionine. Y9 carries the 3'-nitrotyrosine modification. The helical; Signal-anchor for type III membrane protein transmembrane segment at 25–45 (LPTNTLMGFGAFAALTTFWYA) threads the bilayer. Residues 46 to 699 (TRPKALKPPC…IDELYSTIKI (654 aa)) are Cytoplasmic-facing. Y85 bears the Phosphotyrosine mark. Y86 carries the 3'-nitrotyrosine modification. The O-linked (GlcNAc) serine glycan is linked to S136. N6-acetyllysine occurs at positions 208, 357, and 387. S621 carries the phosphoserine modification. Residue K633 is modified to N6-acetyllysine.

The protein belongs to the ATP-dependent AMP-binding enzyme family. Mg(2+) serves as cofactor. Liver, heart, epididymal adipose and to a lesser extent brain, small intestine and lung.

The protein localises to the mitochondrion outer membrane. It is found in the peroxisome membrane. It localises to the microsome membrane. The protein resides in the endoplasmic reticulum membrane. The enzyme catalyses a long-chain fatty acid + ATP + CoA = a long-chain fatty acyl-CoA + AMP + diphosphate. It catalyses the reaction (5Z,8Z,11Z,14Z)-eicosatetraenoate + ATP + CoA = (5Z,8Z,11Z,14Z)-eicosatetraenoyl-CoA + AMP + diphosphate. It carries out the reaction 3,7,11,15-tetramethylhexadecanoate + ATP + CoA = phytanoyl-CoA + AMP + diphosphate. The catalysed reaction is hexadecanoate + ATP + CoA = hexadecanoyl-CoA + AMP + diphosphate. The enzyme catalyses (E)-hexadec-2-enoate + ATP + CoA = (2E)-hexadecenoyl-CoA + AMP + diphosphate. It catalyses the reaction 2,6,10,14-tetramethylpentadecanoate + ATP + CoA = pristanoyl-CoA + AMP + diphosphate. It carries out the reaction 14,15-epoxy-(5Z,8Z,11Z)-eicosatrienoate + ATP + CoA = 14,15-epoxy-(5Z,8Z,11Z)-eicosatrienoyl-CoA + AMP + diphosphate. The catalysed reaction is 5-hydroxy-(6E,8Z,11Z,14Z)-eicosatetraenoate + ATP + CoA = 5-hydroxy-(6E,8Z,11Z,14Z)-eicosatetraenoyl-CoA + AMP + diphosphate. The enzyme catalyses 12-hydroxy-(5Z,8Z,10E,14Z)-eicosatetraenoate + ATP + CoA = 12-hydroxy-(5Z,8Z,10E,14Z)-eicosatetraenoyl-CoA + AMP + diphosphate. It catalyses the reaction 15-hydroxy-(5Z,8Z,11Z,13E)-eicosatetraenoate + ATP + CoA = 15-hydroxy-(5Z,8Z,11Z,13E)-eicosatetraenoyl-CoA + AMP + diphosphate. It carries out the reaction (9Z)-octadecenoate + ATP + CoA = (9Z)-octadecenoyl-CoA + AMP + diphosphate. Inhibited at high temperature and by arachidonate. Its function is as follows. Catalyzes the conversion of long-chain fatty acids to their active form acyl-CoAs for both synthesis of cellular lipids, and degradation via beta-oxidation. Preferentially uses palmitoleate, oleate and linoleate. Preferentially activates arachidonate than epoxyeicosatrienoic acids (EETs) or hydroxyeicosatrienoic acids (HETEs). This chain is Long-chain-fatty-acid--CoA ligase 1, found in Rattus norvegicus (Rat).